A 158-amino-acid chain; its full sequence is Endoribonuclease YbeY (158 aa).

Zn(2+) contacts are provided by H117, H121, and H127.

It belongs to the endoribonuclease YbeY family. Zn(2+) is required as a cofactor.

The protein localises to the cytoplasm. In terms of biological role, single strand-specific metallo-endoribonuclease involved in late-stage 70S ribosome quality control and in maturation of the 3' terminus of the 16S rRNA. The polypeptide is Endoribonuclease YbeY (Buchnera aphidicola subsp. Schizaphis graminum (strain Sg)).